We begin with the raw amino-acid sequence, 747 residues long: Photosystem I P700 chlorophyll a apoprotein A2 (747 aa).

Helical transmembrane passes span 46–69 (LFATHFGHLAIIGLWVAGNLFHIA), 135–158 (LFQGAIFLNILVCWLLFAGWLHLQ), 175–199 (LNHHLAVLFGFSSIAWTGHLVHVAI), 273–291 (IAHHHLAIGVMFIIAGHMY), 341–364 (LHFQLGLALASLGAACSLVAQHMG), 380–406 (SALYTHHQYIAMFLMVGAFSHGAIFFV), 428–450 (ALISHLSWVTMLLGFHTLGIYVH), and 530–548 (FLVHHAIALGLHTTALILI). The [4Fe-4S] cluster site is built by C572 and C581. 2 helical membrane passes run 588–609 (ATYLAMFWALNTIAWITFYWHW) and 656–678 (LSPWAWMFLFGHLIWATGFMFLI). Divinyl chlorophyll a contacts are provided by H667, M675, and Y683. Residue W684 coordinates phylloquinone. A helical membrane pass occupies residues 720–740 (LVGLTHFTVGNFVTFGAFVIA).

It belongs to the PsaA/PsaB family. In terms of assembly, the PsaA/B heterodimer binds the P700 divinyl chlorophyll special pair and subsequent electron acceptors. PSI consists of a core antenna complex that captures photons, and an electron transfer chain that converts photonic excitation into a charge separation. The cyanobacterial PSI reaction center is composed of one copy each of PsaA,B,C,D,E,F,I,J,K,L,M and X, and forms trimeric complexes. PSI electron transfer chain: 5 divinyl chlorophyll a, 1 divinyl chlorophyll a', 2 phylloquinones and 3 4Fe-4S clusters. PSI core antenna: 90 divinyl chlorophyll a, 22 carotenoids, 3 phospholipids and 1 galactolipid. P700 is a divinyl chlorophyll a/divinyl chlorophyll a' dimer, A0 is one or more divinyl chlorophyll a, A1 is one or both phylloquinones and FX is a shared 4Fe-4S iron-sulfur center. serves as cofactor.

Its subcellular location is the cellular thylakoid membrane. The enzyme catalyses reduced [plastocyanin] + hnu + oxidized [2Fe-2S]-[ferredoxin] = oxidized [plastocyanin] + reduced [2Fe-2S]-[ferredoxin]. PsaA and PsaB bind P700, the primary electron donor of photosystem I (PSI), as well as the electron acceptors A0, A1 and FX. PSI is a plastocyanin/cytochrome c6-ferredoxin oxidoreductase, converting photonic excitation into a charge separation, which transfers an electron from the donor P700 chlorophyll pair to the spectroscopically characterized acceptors A0, A1, FX, FA and FB in turn. Oxidized P700 is reduced on the lumenal side of the thylakoid membrane by plastocyanin or cytochrome c6. In Prochlorococcus marinus (strain SARG / CCMP1375 / SS120), this protein is Photosystem I P700 chlorophyll a apoprotein A2.